The chain runs to 396 residues: Acetate kinase (396 aa).

Mg(2+) is bound at residue Asn-8. Lys-15 contributes to the ATP binding site. Residue Arg-89 participates in substrate binding. Residue Asp-146 is the Proton donor/acceptor of the active site. Residues 206–210 (HLGNG), 280–282 (DMR), and 328–332 (GVGEN) each bind ATP. A Mg(2+)-binding site is contributed by Glu-382.

This sequence belongs to the acetokinase family. In terms of assembly, homodimer. It depends on Mg(2+) as a cofactor. Requires Mn(2+) as cofactor.

Its subcellular location is the cytoplasm. The catalysed reaction is acetate + ATP = acetyl phosphate + ADP. The protein operates within metabolic intermediate biosynthesis; acetyl-CoA biosynthesis; acetyl-CoA from acetate: step 1/2. In terms of biological role, catalyzes the formation of acetyl phosphate from acetate and ATP. Can also catalyze the reverse reaction. The protein is Acetate kinase of Clavibacter sepedonicus (Clavibacter michiganensis subsp. sepedonicus).